The chain runs to 161 residues: Nucleotide-binding protein HCH_04620 (161 aa).

It belongs to the YajQ family.

In terms of biological role, nucleotide-binding protein. The chain is Nucleotide-binding protein HCH_04620 from Hahella chejuensis (strain KCTC 2396).